We begin with the raw amino-acid sequence, 1285 residues long: Protein crumbs homolog 2 (1285 aa).

An N-terminal signal peptide occupies residues 1 to 28; that stretch reads MALARPGTPDPQALASVLLLLLWAPALS. The required for maximum inhibition of APP amyloid-beta peptide secretion stretch occupies residues 1 to 350; sequence MALARPGTPD…GFQCHCPDGY (350 aa). The EGF-like 1 domain maps to 67–106; it reads EPRGCATQPCHHGALCVPQGPDPTGFRCYCVPGFQGPRCE. Disulfide bonds link Cys-71-Cys-82, Cys-76-Cys-94, Cys-96-Cys-105, Cys-112-Cys-123, Cys-117-Cys-132, Cys-134-Cys-143, Cys-150-Cys-161, Cys-155-Cys-170, Cys-172-Cys-181, Cys-188-Cys-199, Cys-193-Cys-208, Cys-210-Cys-220, Cys-227-Cys-238, Cys-232-Cys-247, Cys-249-Cys-258, Cys-265-Cys-276, Cys-270-Cys-306, Cys-308-Cys-317, Cys-324-Cys-335, Cys-329-Cys-344, Cys-346-Cys-355, Cys-362-Cys-373, Cys-367-Cys-382, Cys-384-Cys-393, Cys-400-Cys-411, Cys-405-Cys-424, and Cys-426-Cys-435. An EGF-like 2; calcium-binding domain is found at 108–144; it reads DIDECASRPCHHGATCRNLADRYECHCPLGYAGVTCE. Residues 146 to 182 form the EGF-like 3; calcium-binding domain; that stretch reads EVDECASAPCLHGGSCLDGVGSFRCVCAPGYGGTRCQ. Residues 184–221 enclose the EGF-like 4; calcium-binding domain; sequence DLDECQSQPCAHGGTCHDLVNGFRCDCAGTGYEGTHCE. EGF-like domains are found at residues 223 to 259 and 261 to 318; these read EVLECASAPCEHNASCLEGLGSFRCLCWPGYSGELCE and DEDE…ADCG. N-linked (GlcNAc...) asparagine glycosylation is present at Asn-235. Ser-267 carries O-linked (Glc...) serine glycosylation. The EGF-like 7; calcium-binding domain occupies 320–356; the sequence is EVDECASRPCLNGGHCQDLPNGFQCHCPDGYAGPTCE. The EGF-like 8; calcium-binding domain occupies 358-394; the sequence is DVDECLSDPCLHGGTCSDTVAGYICRCPETWGGRDCS. The 41-residue stretch at 396–436 folds into the EGF-like 9 domain; that stretch reads QLTGCQGHTCPLAATCIPIFESGVHSYVCHCPPGTHGPFCG. One can recognise a Laminin G-like 1 domain in the interval 431–603; sequence HGPFCGQNTT…DLGENVLLGC (173 aa). Asn-438 and Asn-478 each carry an N-linked (GlcNAc...) asparagine glycan. Intrachain disulfides connect Cys-579–Cys-603, Cys-609–Cys-620, Cys-614–Cys-629, and Cys-631–Cys-640. The EGF-like 10 domain maps to 605 to 641; it reads RREQCRPLPCVHGGSCVDLWTHFRCDCARPHRGPTCA. The Laminin G-like 2 domain occupies 647–805; it reads ATFGLGGAPS…RQSWNLTAGC (159 aa). Asn-669, Asn-690, Asn-786, and Asn-800 each carry an N-linked (GlcNAc...) asparagine glycan. 4 cysteine pairs are disulfide-bonded: Cys-766-Cys-805, Cys-811-Cys-822, Cys-816-Cys-831, and Cys-833-Cys-842. The EGF-like 11 domain occupies 807–843; the sequence is SEDMCSPDPCFNGGTCLVTWNDFHCTCPANFTGPTCA. Asn-836, Asn-886, Asn-926, and Asn-1009 each carry an N-linked (GlcNAc...) asparagine glycan. The Laminin G-like 3 domain maps to 871-1054; sequence EATFREGPPA…PGTPAPILGC (184 aa). 13 disulfide bridges follow: Cys-1013–Cys-1054, Cys-1060–Cys-1071, Cys-1065–Cys-1080, Cys-1082–Cys-1091, Cys-1098–Cys-1108, Cys-1103–Cys-1118, Cys-1120–Cys-1129, Cys-1138–Cys-1150, Cys-1144–Cys-1159, Cys-1161–Cys-1170, Cys-1177–Cys-1188, Cys-1182–Cys-1197, and Cys-1199–Cys-1208. EGF-like domains follow at residues 1056 to 1092, 1094 to 1130, 1134 to 1171, and 1173 to 1209; these read GAPVCAPSPCLHDGACRDLFDAFACACGPGWEGPRCE, HVDPCHSAPCARGRCHTHPDGRFECRCPPGFGGPRCR, PSKECSLNVTCLDGSPCEGGSPAANCSCLEGLAGQRCQ, and PTLPCEANPCLNGGTCRAAGGVSECICNARFSGQFCE. Residues Asn-1141 and Asn-1158 are each glycosylated (N-linked (GlcNAc...) asparagine). The chain crosses the membrane as a helical span at residues 1225-1245; sequence VAVPAACACLLLLLLGLLSGI. Positions 1249–1285 are interaction with EPB41L5; it reads RKRRQSEGTYSPSQQEVAGARLEMDSVLKVPPEERLI.

This sequence belongs to the Crumbs protein family. As to quaternary structure, associates with the gamma-secretase complex via interaction (via the transmembrane domain) with PSEN1/PS1. Interacts (via intracellular domain) with EPB41L5. Interacts with PALS1. Post-translationally, O-glucosylated by POGLUT1 at Ser-267; consists of an O-glucose trisaccharide, in which the O-glucose is elongated by the addition of two xylose residues. O-glucosylation is required for localization at the plasma membrane. N-glycosylated. Expressed in glomeruli, podocytes of the glomerular capillary loops, and parietal glomerular epithelial cells in the kidney (at protein level). Expressed in retina, fetal eye and brain. Also expressed in kidney, RPE/choroid, and at low levels in lung, placenta, and heart.

It is found in the apical cell membrane. It localises to the cytoplasm. Its subcellular location is the cell junction. The protein localises to the secreted. In terms of biological role, apical polarity protein that plays a central role during the epithelial-to-mesenchymal transition (EMT) at gastrulation, when newly specified mesodermal cells move inside the embryo. Acts by promoting cell ingression, the process by which cells leave the epithelial epiblast and move inside the embryo to form a new tissue layer. The anisotropic distribution of CRB2 and MYH10/myosin-IIB at cell edges define which cells will ingress: cells with high apical CRB2 are probably extruded from the epiblast by neighboring cells with high levels of apical MYH10/myosin-IIB. Plays a role in the maintenance of retinal neuroepithelium organization, structural integrity, adhesion, photoreceptor polarity and retinal photoreceptor layer thickness. May play a role in determining the length of cone photoreceptor outer segments and proliferation of late-born progenitor cells. Also required for maintenance of the apical polarity complex during development of the cortex. Inhibits gamma-secretase-dependent cleavage of APP and secretion of amyloid-beta peptide 40 and amyloid-beta peptide 42, and thereby inhibits gamma-secretase-dependent Notch transcription. The chain is Protein crumbs homolog 2 from Homo sapiens (Human).